A 29-amino-acid polypeptide reads, in one-letter code: Glucagon (29 aa).

This sequence belongs to the glucagon family.

It is found in the secreted. Its function is as follows. Promotes hydrolysis of glycogen and lipids, and raises the blood sugar level. This is Glucagon (gcg) from Thunnus obesus (Bigeye tuna).